The chain runs to 344 residues: Acireductone dioxygenase (344 aa).

Fe(2+)-binding residues include His-92, His-94, Glu-98, and His-137. Ni(2+)-binding residues include His-92, His-94, Glu-98, and His-137.

It belongs to the acireductone dioxygenase (ARD) family. Requires Fe(2+) as cofactor. Ni(2+) serves as cofactor.

Its subcellular location is the cytoplasm. The protein resides in the nucleus. The catalysed reaction is 1,2-dihydroxy-5-(methylsulfanyl)pent-1-en-3-one + O2 = 4-methylsulfanyl-2-oxobutanoate + formate + 2 H(+). It catalyses the reaction 1,2-dihydroxy-5-(methylsulfanyl)pent-1-en-3-one + O2 = 3-(methylsulfanyl)propanoate + CO + formate + 2 H(+). It participates in amino-acid biosynthesis; L-methionine biosynthesis via salvage pathway; L-methionine from S-methyl-5-thio-alpha-D-ribose 1-phosphate: step 5/6. Catalyzes 2 different reactions between oxygen and the acireductone 1,2-dihydroxy-3-keto-5-methylthiopentene (DHK-MTPene) depending upon the metal bound in the active site. Fe-containing acireductone dioxygenase (Fe-ARD) produces formate and 2-keto-4-methylthiobutyrate (KMTB), the alpha-ketoacid precursor of methionine in the methionine recycle pathway. Ni-containing acireductone dioxygenase (Ni-ARD) produces methylthiopropionate, carbon monoxide and formate, and does not lie on the methionine recycle pathway. This is Acireductone dioxygenase from Leishmania major.